The chain runs to 459 residues: tRNA modification GTPase MnmE (459 aa).

(6S)-5-formyl-5,6,7,8-tetrahydrofolate is bound by residues Arg23, Glu85, and Arg124. The TrmE-type G domain maps to 221–380; it reads GLSTAIIGRP…LEKAIADTFF (160 aa). Residue Asn231 participates in K(+) binding. Residues 231–236, 250–256, and 275–278 contribute to the GTP site; these read NVGKSS, TEIPGTT, and DTAG. Ser235 contributes to the Mg(2+) binding site. Thr250, Ile252, and Thr255 together coordinate K(+). Position 256 (Thr256) interacts with Mg(2+). Lys459 is a binding site for (6S)-5-formyl-5,6,7,8-tetrahydrofolate.

Belongs to the TRAFAC class TrmE-Era-EngA-EngB-Septin-like GTPase superfamily. TrmE GTPase family. In terms of assembly, homodimer. Heterotetramer of two MnmE and two MnmG subunits. K(+) serves as cofactor.

The protein localises to the cytoplasm. Functionally, exhibits a very high intrinsic GTPase hydrolysis rate. Involved in the addition of a carboxymethylaminomethyl (cmnm) group at the wobble position (U34) of certain tRNAs, forming tRNA-cmnm(5)s(2)U34. In Oceanobacillus iheyensis (strain DSM 14371 / CIP 107618 / JCM 11309 / KCTC 3954 / HTE831), this protein is tRNA modification GTPase MnmE.